The following is a 387-amino-acid chain: MAGSDPGSRGSSPQPPHSDWGRLEAAFLSGWRNFWQSVGKERAAPRASAEEVDEEASSLTRLPIDVQLYILSFLSPHDLCQLGSTSRYWNETVRDPILWRYFLLRDLPSWSSVDWKSLPDLEILKKPISEVTNGAFFDYMAVYKMCCPHTRRSSKSSRPMYGAVTSFLHSLIIQNEPRFAMFGPGLEELNTSLVLSLMSSEELCPTAGLPQRQIDGIGSGVSFQLNNQHKFNILILYSTTRKERDRAREEHTSAVNKMFSVQNEGDDQQGSRYSVIPQIQKVCEVVDGFIYVANAEAHKRHEWQDEFSRIMAMTDPAFGSSGRPMLVLSCISQANVKRMPCFYLAHELRLNHLNHPWMVQDTEAETLTGFLNGIQWILEEVESKHAR.

3 positions are modified to phosphoserine: serine 11, serine 12, and serine 48. In terms of domain architecture, F-box spans 56–102 (ASSLTRLPIDVQLYILSFLSPHDLCQLGSTSRYWNETVRDPILWRYF).

In terms of assembly, homodimer. Part of the SCF (SKP1-CUL1-F-box) E3 ubiquitin-protein ligase complex SCF(FBXO4) formed of CUL1, SKP1, RBX1 and FBXO4. Interacts with TERF1; this interaction is prevented in the presence of GNL3L. Identified in a complex with CRYAB and CCND1. Phosphorylation at Ser-11 varies during the cell cycle. It is low in resting cells and high in the S phase and the G2/M phase of the cell cycle. Phosphorylation is decreased during late G1 phase. Phosphorylation at Ser-11 promotes homodimerization and is necessary for optimal ubiquitin ligase activity towards CCND1.

It localises to the cytoplasm. It participates in protein modification; protein ubiquitination. Functionally, substrate recognition component of a SCF (SKP1-CUL1-F-box protein) E3 ubiquitin-protein ligase complex that mediates the ubiquitination and subsequent proteasomal degradation of target proteins. Promotes ubiquitination of cyclin-D1 (CCND1) and its subsequent proteasomal degradation. However, it does not act as a major regulator of CCND1 stability during the G1/S transition. Recognizes TERF1 and promotes its ubiquitination together with UBE2D1. Promotes ubiquitination of FXR1 following phosphorylation of FXR1 by GSK3B, leading to FXR1 degradation by the proteasome. The chain is F-box only protein 4 (FBXO4) from Bos taurus (Bovine).